An 831-amino-acid chain; its full sequence is V-type proton ATPase 116 kDa subunit a1 (831 aa).

At 1 to 388 the chain is on the cytoplasmic side; that stretch reads MGELFRSEEM…DAYGIGSYRE (388 aa). A helical transmembrane segment spans residues 389 to 407; sequence INPAPYTIITFPFLFAVMF. The Vacuolar portion of the chain corresponds to 408 to 409; that stretch reads GD. The chain crosses the membrane as a helical span at residues 410–426; sequence FGHGILMTLFAVWMVVR. Topologically, residues 427-441 are cytoplasmic; it reads ESRILSQKIDNELFS. A helical transmembrane segment spans residues 442-471; it reads MMFSGRYIILLMGLFSTYTGLIYNDCFSKA. Over 472–534 the chain is Vacuolar; the sequence is LNLFGSSWSV…ATNKLTFLNS (63 aa). The helical transmembrane segment at 535 to 554 threads the bilayer; the sequence is FKMKMSVILGIIHMIFGVAL. Topologically, residues 555–572 are cytoplasmic; the sequence is SVLNHIYFKKPLNIYLSF. The chain crosses the membrane as a helical span at residues 573–593; sequence IPEMIFMTTLFGYLVILIIYK. At 594–638 the chain is on the vacuolar side; that stretch reads WCAYDVSTSMVAPSLLIHFINMFLFSYQDTSLPMLYKGQMGLQCF. Residues 639–658 traverse the membrane as a helical segment; it reads LVVCAIICVPWMLVLKPLIL. Residues 659–718 lie on the Cytoplasmic side of the membrane; that stretch reads RRQYLRRKHLGTHNFGGIRVGNGPTEEDAEIIQHDQLSMHSDEEEEFDFGDTVVHQAIHT. The helical transmembrane segment at 719-743 threads the bilayer; the sequence is IEYCLGCISNTASYLRLWALSLAHA. Over 744–764 the chain is Vacuolar; it reads QLSEVLWTMVMHIGLNIRSLG. Residues 765 to 803 form a helical membrane-spanning segment; that stretch reads GGIALVFIFSAFATLTIAILLIMEGLSAFLHALRLHWVE. The Cytoplasmic portion of the chain corresponds to 804 to 831; sequence FRNKFYMGTGFKFLPFSFETIWEGKFDD.

The protein belongs to the V-ATPase 116 kDa subunit family. As to quaternary structure, V-ATPase is a heteromultimeric enzyme made up of two complexes: the ATP-hydrolytic V1 complex and the proton translocation V0 complex. The V1 complex consists of three catalytic AB heterodimers that form a heterohexamer, three peripheral stalks each consisting of EG heterodimers, one central rotor including subunits D and F, and the regulatory subunits C and H. The proton translocation complex V0 consists of the proton transport subunit a, a ring of proteolipid subunits c9c'', rotary subunit d, subunits e and f, and two accessory subunits.

The protein localises to the cytoplasmic vesicle. Its subcellular location is the clathrin-coated vesicle membrane. It localises to the secretory vesicle. It is found in the synaptic vesicle membrane. The protein resides in the melanosome. Functionally, subunit of the V0 complex of vacuolar(H+)-ATPase (V-ATPase), a multisubunit enzyme composed of a peripheral complex (V1) that hydrolyzes ATP and a membrane integral complex (V0) that translocates protons. V-ATPase is responsible for acidifying and maintaining the pH of intracellular compartments and in some cell types, is targeted to the plasma membrane, where it is responsible for acidifying the extracellular environment. Required for assembly and activity of the vacuolar ATPase. This is V-type proton ATPase 116 kDa subunit a1 (atp6v0a1) from Xenopus laevis (African clawed frog).